Consider the following 747-residue polypeptide: ESX-1 secretion system protein EccCa1 (747 aa).

3 helical membrane passes run 41-61 (ILPY…VAGG), 65-85 (LSPY…GGLA), and 222-242 (FPTI…TAMI). A FtsK domain is found at 456–665 (GNVMYLDIKE…LRTTSSHESK (210 aa)). Residue 479 to 486 (GTTGSGKS) participates in ATP binding.

Part of the ESX-1 / type VII secretion system (T7SS), which is composed of cytosolic and membrane components. The ESX-1 membrane complex is composed of EccB1, EccCa1, EccCb1, EccD1 and EccE1.

It localises to the cell inner membrane. Functionally, part of the ESX-1 specialized secretion system, which delivers several virulence factors to host cells during infection, including the key virulence factors EsxA (ESAT-6) and EsxB (CFP-10). The polypeptide is ESX-1 secretion system protein EccCa1 (Mycobacterium tuberculosis (strain CDC 1551 / Oshkosh)).